A 422-amino-acid polypeptide reads, in one-letter code: Zinc-regulated transporter 2 (422 aa).

The Extracellular segment spans residues 1 to 27; it reads MVDLIARDDSVDTCQASNGYNGHAGLR. The helical transmembrane segment at 28–48 threads the bilayer; that stretch reads ILAVFIILISSGLGVYFPILS. At 49–60 the chain is on the cytoplasmic side; sequence SRYSFIRLPNWC. A helical membrane pass occupies residues 61-81; that stretch reads FFIAKFFGSGVIVATAFVHLL. Residues 82 to 99 are Extracellular-facing; the sequence is QPAAEALGDECLGGTFAE. The chain crosses the membrane as a helical span at residues 100–120; it reads YPWAFGICLMSLFLLFFTEII. At 121–262 the chain is on the cytoplasmic side; that stretch reads THYFVAKTLG…EEDKEQYLNQ (142 aa). Ser-148, Ser-149, Ser-162, and Ser-170 each carry phosphoserine. Thr-188 is subject to Phosphothreonine. Residues 263–283 form a helical membrane-spanning segment; sequence ILAVFILEFGIIFHSVFVGLS. Topologically, residues 284–290 are extracellular; it reads LSVAGEE. Residues 291–311 form a helical membrane-spanning segment; the sequence is FETLFIVLTFHQMFEGLGLGT. The Cytoplasmic portion of the chain corresponds to 312 to 326; it reads RVAETNWPESKKYMP. The helical transmembrane segment at 327–347 threads the bilayer; that stretch reads WLMGLAFTLTSPIAVAVGIGV. The Extracellular portion of the chain corresponds to 348–358; the sequence is RHSWIPGSRRA. The helical transmembrane segment at 359-379 threads the bilayer; sequence LIANGVFDSISSGILIYTGLV. The Cytoplasmic portion of the chain corresponds to 380–400; it reads ELMAHEFLYSNQFKGPDGLKK. A helical transmembrane segment spans residues 401-421; the sequence is MLSAYLIMCCGAALMALLGKW. Ala-422 is a topological domain (extracellular).

It belongs to the ZIP transporter (TC 2.A.5) family.

The protein localises to the membrane. Its function is as follows. Low-affinity zinc transport protein. Active in zinc-replete cells and is time-, temperature- and concentration-dependent and prefers zinc over other metals as its substrate. This chain is Zinc-regulated transporter 2 (ZRT2), found in Saccharomyces cerevisiae (strain ATCC 204508 / S288c) (Baker's yeast).